The sequence spans 141 residues: Small ribosomal subunit protein uS12 (141 aa).

Positions 118-141 (TGVDKRRQQRSAYGAKRPKADKKK) are disordered.

Belongs to the universal ribosomal protein uS12 family. In terms of assembly, part of the 30S ribosomal subunit. Contacts proteins S8 and S17. May interact with IF1 in the 30S initiation complex.

Functionally, with S4 and S5 plays an important role in translational accuracy. In terms of biological role, interacts with and stabilizes bases of the 16S rRNA that are involved in tRNA selection in the A site and with the mRNA backbone. Located at the interface of the 30S and 50S subunits, it traverses the body of the 30S subunit contacting proteins on the other side and probably holding the rRNA structure together. The combined cluster of proteins S8, S12 and S17 appears to hold together the shoulder and platform of the 30S subunit. The polypeptide is Small ribosomal subunit protein uS12 (Mycoplasmoides gallisepticum (strain R(low / passage 15 / clone 2)) (Mycoplasma gallisepticum)).